Consider the following 308-residue polypeptide: Mannan endo-1,4-beta-mannosidase (308 aa).

E125 acts as the Proton donor in catalysis. The Nucleophile role is filled by E220. The segment at 284–308 (DGLQETSKPSTVFTDDNGGHPEPPT) is disordered. Residues 287–297 (QETSKPSTVFT) are compositionally biased toward polar residues.

Belongs to the glycosyl hydrolase 5 (cellulase A) family.

It carries out the reaction Random hydrolysis of (1-&gt;4)-beta-D-mannosidic linkages in mannans, galactomannans and glucomannans.. In terms of biological role, catalyzes the endo hydrolysis of beta-1,4-linked mannan, galactomannan and glucomannan. It is able to hydrolyze mannosidic linkages that are flanked by mannose or glucose. This Salipaludibacillus agaradhaerens (Bacillus agaradhaerens) protein is Mannan endo-1,4-beta-mannosidase.